Consider the following 479-residue polypeptide: Small ribosomal subunit protein bS1 (479 aa).

S1 motif domains follow at residues 36 to 105 (GDIV…LSKK), 123 to 188 (DEAV…LSRR), 209 to 277 (GAIR…LSLK), and 294 to 363 (GQIV…LSLK). The tract at residues 429-466 (TAQMEKFAAAEAEAANAPVSNGSSRSEESSGGTLASDA) is disordered. Low complexity predominate over residues 437–460 (AAEAEAANAPVSNGSSRSEESSGG).

Belongs to the bacterial ribosomal protein bS1 family. Binds uncharacterized protein MSMEG_2731/MSMEI_2664.

Binds mRNA, facilitating recognition of most mRNAs by the 30S ribosomal subunit during translation initiation. Plays a role in trans-translation; binds tmRNA (the product of the ssrA gene). Binds very poorly to pyrazinoic acid (POA), the active form of the prodrug pyrazinamide (PZA); POA does not disrupt trans-translation in this organism. M.smegmatis is resistant to the antibiotic PZA. In trans-translation Ala-aminoacylated transfer-messenger RNA (tmRNA, product of the ssrA gene; the 2 termini fold to resemble tRNA(Ala) while it encodes a short internal open reading frame (the tag peptide)) acts like a tRNA, entering the A-site of the ribosome and displacing the stalled mRNA (which is subsequently degraded). The ribosome then switches to translate the ORF on the tmRNA, the nascent peptide is terminated with the 'tag peptide' encoded by the tmRNA and thus targeted for degradation. In Mycolicibacterium smegmatis (strain ATCC 700084 / mc(2)155) (Mycobacterium smegmatis), this protein is Small ribosomal subunit protein bS1 (rpsA).